Reading from the N-terminus, the 248-residue chain is 2,3-bisphosphoglycerate-dependent phosphoglycerate mutase (248 aa).

Substrate-binding positions include 8-15, 21-22, arginine 60, 87-90, lysine 98, 114-115, and 183-184; these read RHGESLWN, TG, ERHY, RR, and GN. The active-site Tele-phosphohistidine intermediate is the histidine 9. Glutamate 87 functions as the Proton donor/acceptor in the catalytic mechanism.

This sequence belongs to the phosphoglycerate mutase family. BPG-dependent PGAM subfamily.

It carries out the reaction (2R)-2-phosphoglycerate = (2R)-3-phosphoglycerate. The protein operates within carbohydrate degradation; glycolysis; pyruvate from D-glyceraldehyde 3-phosphate: step 3/5. Catalyzes the interconversion of 2-phosphoglycerate and 3-phosphoglycerate. This Methanospirillum hungatei JF-1 (strain ATCC 27890 / DSM 864 / NBRC 100397 / JF-1) protein is 2,3-bisphosphoglycerate-dependent phosphoglycerate mutase.